A 956-amino-acid chain; its full sequence is Dual specificity protein kinase YAK1 homolog (956 aa).

The Protein kinase domain maps to 122-464 (YIVKDLLGHG…PFQAAKHPFI (343 aa)). Residues 128-136 (LGHGTFGQV) and lysine 151 contribute to the ATP site. Serine 222 is subject to Phosphoserine. Aspartate 249 serves as the catalytic Proton acceptor. Disordered stretches follow at residues 620–657 (LGTS…HGSP), 672–781 (SAGY…NYSD), and 806–956 (GSTD…GSIA). Residues 622 to 636 (TSPSQFTPNTNNQFL) show a composition bias toward polar residues. A compositionally biased stretch (low complexity) spans 672–691 (SAGYSGGSQSQDSSLSQAQG). Composition is skewed to polar residues over residues 697–713 (FYQN…SPSR), 725–757 (QTQG…SSTA), and 806–817 (GSTDASSYSRRF). A compositionally biased stretch (low complexity) spans 818 to 830 (NSNASTSSSNPTT). Polar residues-rich tracts occupy residues 838-849 (QAFSQVETGSPP), 870-884 (VSQN…QPPQ), and 902-912 (MNAQLPPSNTN). Over residues 913 to 924 (SGGQQRSPRSSS) the composition is skewed to low complexity. A compositionally biased stretch (polar residues) spans 937–947 (NHVPNVPSTSH).

This sequence belongs to the protein kinase superfamily. Ser/Thr protein kinase family. Post-translationally, autophosphorylated at Ser-222.

It carries out the reaction L-seryl-[protein] + ATP = O-phospho-L-seryl-[protein] + ADP + H(+). It catalyses the reaction L-threonyl-[protein] + ATP = O-phospho-L-threonyl-[protein] + ADP + H(+). The catalysed reaction is L-tyrosyl-[protein] + ATP = O-phospho-L-tyrosyl-[protein] + ADP + H(+). In terms of biological role, dual specificity protein kinase that phosphorylates ANN1, ANN2 and CP29B at serine and threonine residues, and ANN1, ANN2 and ANN4 at tyrosine residues. May regulate the phosphorylation status of annexin proteins. Acts as a positive regulator in abscisic acid (ABA)-mediated regulation of postgermination growth and drought response. May regulate the expression of ABA-responsive genes such as RD22, RD29A, LTI65/RD29B and RAB18. This Arabidopsis thaliana (Mouse-ear cress) protein is Dual specificity protein kinase YAK1 homolog.